A 138-amino-acid polypeptide reads, in one-letter code: Trypsin inhibitor DE5 alpha chain (138 aa).

A disulfide bond links C40 and C86.

This sequence belongs to the protease inhibitor I3 (leguminous Kunitz-type inhibitor) family. Heterodimer of an alpha and a beta chain linked by a disulfide bond.

In terms of biological role, inhibition of trypsin. This Adenanthera pavonina (Sandal bead tree) protein is Trypsin inhibitor DE5 alpha chain.